Here is a 565-residue protein sequence, read N- to C-terminus: Wee1-like protein kinase 2 (565 aa).

Disordered regions lie at residues 18-78 and 169-191; these read YCEE…KSPE and KSNG…GNVE. A compositionally biased stretch (acidic residues) spans 19 to 29; it reads CEEESESEGQE. Over residues 31-51 the composition is skewed to basic and acidic residues; that stretch reads WETRDAHSQIPDRAEGQESEA. Residue Ser-76 is modified to Phosphoserine. Residues 173–175 carry the Nuclear localization signal motif; that stretch reads KRK. The region spanning 214-492 is the Protein kinase domain; sequence FLEVEKIGVG…ARSRVLRPSL (279 aa). ATP contacts are provided by residues 220 to 228 and Lys-243; that span reads IGVGEFGTV. A Nuclear export signal motif is present at residues 317–331; sequence KLKDILLQISLGLKY. The Proton acceptor role is filled by Asp-341. Mg(2+) is bound by residues Asn-346 and Asp-382. Residues 495–521 adopt a coiled-coil conformation; the sequence is AEELQQQLNLEKFKTATLERELREAQQ. A disordered region spans residues 521–565; the sequence is QAWFSQEERGDAGVSGTPTGSRSTKRLVGGKSAKSSSFTWGKSSP. Residues 553–565 show a composition bias toward polar residues; the sequence is AKSSSFTWGKSSP.

The protein belongs to the protein kinase superfamily. Ser/Thr protein kinase family. WEE1 subfamily. In terms of processing, phosphorylation leads to increase its activity.

It is found in the nucleus. The enzyme catalyses L-tyrosyl-[protein] + ATP = O-phospho-L-tyrosyl-[protein] + ADP + H(+). Functionally, oocyte-specific protein tyrosine kinase that phosphorylates and inhibits CDK1 and acts as a key regulator of meiosis during both prophase I and metaphase II. Required to maintain meiotic arrest in oocytes during the germinal vesicle (GV) stage, a long period of quiescence at dictyate prophase I, by phosphorylating CDK1 at 'Tyr-15', leading to inhibit CDK1 activity and prevent meiotic reentry. Also required for metaphase II exit during egg activation by phosphorylating CDK1 at 'Tyr-15', to ensure exit from meiosis in oocytes and promote pronuclear formation. The chain is Wee1-like protein kinase 2 (WEE2) from Ailuropoda melanoleuca (Giant panda).